The sequence spans 20 residues: Unknown protein NF028 from 2D-PAGE (20 aa).

This is Unknown protein NF028 from 2D-PAGE from Naegleria fowleri (Brain eating amoeba).